The chain runs to 321 residues: tRNA(Ile)-lysidine synthase (321 aa).

Residue 30 to 35 coordinates ATP; that stretch reads SGGSDS.

It belongs to the tRNA(Ile)-lysidine synthase family.

The protein localises to the cytoplasm. It catalyses the reaction cytidine(34) in tRNA(Ile2) + L-lysine + ATP = lysidine(34) in tRNA(Ile2) + AMP + diphosphate + H(+). In terms of biological role, ligates lysine onto the cytidine present at position 34 of the AUA codon-specific tRNA(Ile) that contains the anticodon CAU, in an ATP-dependent manner. Cytidine is converted to lysidine, thus changing the amino acid specificity of the tRNA from methionine to isoleucine. In Chlamydia trachomatis serovar D (strain ATCC VR-885 / DSM 19411 / UW-3/Cx), this protein is tRNA(Ile)-lysidine synthase.